An 88-amino-acid chain; its full sequence is DNA-directed RNA polymerase subunit omega (88 aa).

Belongs to the RNA polymerase subunit omega family. The RNAP catalytic core consists of 2 alpha, 1 beta, 1 beta' and 1 omega subunit. When a sigma factor is associated with the core the holoenzyme is formed, which can initiate transcription.

It carries out the reaction RNA(n) + a ribonucleoside 5'-triphosphate = RNA(n+1) + diphosphate. In terms of biological role, promotes RNA polymerase assembly. Latches the N- and C-terminal regions of the beta' subunit thereby facilitating its interaction with the beta and alpha subunits. The polypeptide is DNA-directed RNA polymerase subunit omega (Clostridioides difficile (strain 630) (Peptoclostridium difficile)).